The following is a 134-amino-acid chain: Phosphomevalonate dehydratase small subunit (134 aa).

S62 serves as the catalytic Proton acceptor.

It belongs to the AcnX type II small subunit family. In terms of assembly, heterodimer composed of a large subunit (PMDh-L) and a small subunit (PMDh-S).

It catalyses the reaction (R)-5-phosphomevalonate = (2E)-3-methyl-5-phosphooxypent-2-enoate + H2O. Its pathway is isoprenoid biosynthesis; isopentenyl diphosphate biosynthesis via mevalonate pathway. In terms of biological role, component of a hydro-lyase that catalyzes the dehydration of mevalonate 5-phosphate (MVA5P) to form trans-anhydromevalonate 5-phosphate (tAHMP). Involved in the archaeal mevalonate (MVA) pathway, which provides fundamental precursors for isoprenoid biosynthesis, such as isopentenyl diphosphate (IPP) and dimethylallyl diphosphate (DMAPP). In Pyrococcus horikoshii (strain ATCC 700860 / DSM 12428 / JCM 9974 / NBRC 100139 / OT-3), this protein is Phosphomevalonate dehydratase small subunit.